Reading from the N-terminus, the 297-residue chain is Halorhodopsin (297 aa).

A disordered region spans residues 1–31 (MRSRTYHDQSVCGPYGSQRTDCDRDTDAGSD). Residues 1-45 (MRSRTYHDQSVCGPYGSQRTDCDRDTDAGSDTDVHGAQVATQIRT) lie on the Extracellular side of the membrane. Residues 46–71 (DTLLHSSLWVNIALAGLSILVFLYMA) traverse the membrane as a helical segment. Topologically, residues 72–77 (RTVRAN) are cytoplasmic. A helical membrane pass occupies residues 78-101 (RARLIVGATLMIPLVSLSSYLGLV). The Extracellular portion of the chain corresponds to 102–125 (TGLTAGPIEMPAAHALAGEDVLSQ). Residues 126-147 (WGRYLTWTLSTPMILLALGWLA) traverse the membrane as a helical segment. At 148–150 (EVD) the chain is on the cytoplasmic side. Residues 151–174 (TADLFVVIAADIGMCLTGLAAALT) traverse the membrane as a helical segment. The Extracellular portion of the chain corresponds to 175 to 177 (TSS). The helical transmembrane segment at 178–200 (YAFRWAFYLVSTAFFVVVLYALL) threads the bilayer. Residues 201-212 (AKWPTNAEAAGT) are Cytoplasmic-facing. The helical transmembrane segment at 213 to 236 (GDIFGTLRWLTVILWLGYPILWAL) threads the bilayer. The Extracellular portion of the chain corresponds to 237–246 (GVEGFALVDS). Residues 247 to 275 (VGLTSWGYSLLDIGAKYLFAALLLRWVAN) traverse the membrane as a helical segment. K262 carries the N6-(retinylidene)lysine modification. The Cytoplasmic segment spans residues 276-297 (NERTIAVGQRSGRGAIGDPVED).

This sequence belongs to the archaeal/bacterial/fungal opsin family.

It localises to the cell membrane. In terms of biological role, light-driven chloride pump. The sequence is that of Halorhodopsin (hop) from Haloterrigena sp. (strain arg-4).